We begin with the raw amino-acid sequence, 1273 residues long: Kinesin-like protein KIN-14A (1273 aa).

The tract at residues 1-52 is disordered; it reads MADQRSKTNRWNWEVSGFEPRKSSSNASFAESTGHRTTGPLLRRNSISTPSL. The stretch at 59–89 forms a coiled coil; sequence ASKVNGLKEKVKLAKEDYLELRQEATDLQEY. The region spanning 142–456 is the Kinesin motor domain; sequence NIKVFCRARP…LNYAARARNT (315 aa). 223–230 provides a ligand contact to ATP; that stretch reads GQTNAGKT. Coiled coils occupy residues 466–511, 559–595, and 627–657; these read IKKW…CVLL, QLDQEQKLQMQQQDSAIQNLQAKITDLESQVSEAVRS, and TKKLEEELKKRDALIERLHEENEKLFDRLTE. Disordered regions lie at residues 827-847 and 1136-1157; these read KPNTGRSKSTSRGSSPGRSPV and QEDTNILEQSHDRRPSLESISS. A compositionally biased stretch (low complexity) spans 830 to 846; that stretch reads TGRSKSTSRGSSPGRSP.

The protein belongs to the TRAFAC class myosin-kinesin ATPase superfamily. Kinesin family. KIN-14 subfamily. Homodimer and heterodimer with KCA2. Interacts with CDKA-1. Interacts with AL1, a geminivirus (TGMV) protein essential for viral replication. Interacts with LUE1/KSS. Post-translationally, part of the phosphorylation is not CDK-dependent. As to expression, widely expressed.

It is found in the nucleus. Its subcellular location is the cytoplasm. The protein resides in the cytoskeleton. The protein localises to the spindle. It localises to the chromosome. It is found in the cell membrane. Its subcellular location is the phragmoplast. In terms of biological role, kinesin-like protein required for chloroplast movements and anchor to the plasma membrane. Mediates chloroplast movement via chloroplast actin (cp-actin) filaments. Required for the chloroplast avoidance response under high intensity blue light. Mediates redundantly with CHUP1 the nuclear avoidance response under high intensity blue light. May act as a mitotic kinesin. Probably involved in division plane determination. In Arabidopsis thaliana (Mouse-ear cress), this protein is Kinesin-like protein KIN-14A.